A 495-amino-acid chain; its full sequence is Ribose import ATP-binding protein RbsA 3 (495 aa).

2 consecutive ABC transporter domains span residues 5–240 (VRLR…VGRE) and 250–492 (AEIG…TGVK). Residue 37–44 (GENGAGKS) coordinates ATP.

It belongs to the ABC transporter superfamily. Ribose importer (TC 3.A.1.2.1) family. As to quaternary structure, the complex is composed of an ATP-binding protein (RbsA), two transmembrane proteins (RbsC) and a solute-binding protein (RbsB).

It localises to the cell membrane. It carries out the reaction D-ribose(out) + ATP + H2O = D-ribose(in) + ADP + phosphate + H(+). Part of the ABC transporter complex RbsABC involved in ribose import. Responsible for energy coupling to the transport system. The chain is Ribose import ATP-binding protein RbsA 3 from Rubrobacter xylanophilus (strain DSM 9941 / JCM 11954 / NBRC 16129 / PRD-1).